A 655-amino-acid polypeptide reads, in one-letter code: UvrABC system protein B (655 aa).

One can recognise a Helicase ATP-binding domain in the interval 25 to 181 (DGINKGEKEQ…IRKLVFMQYE (157 aa)). 38-45 (GVTGSGKT) provides a ligand contact to ATP. Residues 91-114 (YYDYYQPEAYVPRTDTFIDKESSV) carry the Beta-hairpin motif. Residues 428-590 (QVEDLLGEVK…IVPKTTKRAL (163 aa)) enclose the Helicase C-terminal domain. The UVR domain occupies 615–650 (RLLISDLENDMKEAAAKLDFERAASLRDQIATLKGL).

The protein belongs to the UvrB family. As to quaternary structure, forms a heterotetramer with UvrA during the search for lesions. Interacts with UvrC in an incision complex.

The protein resides in the cytoplasm. Functionally, the UvrABC repair system catalyzes the recognition and processing of DNA lesions. A damage recognition complex composed of 2 UvrA and 2 UvrB subunits scans DNA for abnormalities. Upon binding of the UvrA(2)B(2) complex to a putative damaged site, the DNA wraps around one UvrB monomer. DNA wrap is dependent on ATP binding by UvrB and probably causes local melting of the DNA helix, facilitating insertion of UvrB beta-hairpin between the DNA strands. Then UvrB probes one DNA strand for the presence of a lesion. If a lesion is found the UvrA subunits dissociate and the UvrB-DNA preincision complex is formed. This complex is subsequently bound by UvrC and the second UvrB is released. If no lesion is found, the DNA wraps around the other UvrB subunit that will check the other stand for damage. This chain is UvrABC system protein B, found in Methanobrevibacter smithii (strain ATCC 35061 / DSM 861 / OCM 144 / PS).